We begin with the raw amino-acid sequence, 950 residues long: F-box only protein 10 (950 aa).

The F-box domain occupies 1–48; sequence METGGLPLELWRMILAYLHLPDLGRCSLVCRAWYELILSLDSTRWRQL. PbH1 repeat units lie at residues 198–217 and 238–260; these read SGHI…QVHG and VPLC…TVEG. Residues 313–364 form a disordered region; sequence IEGSQSPTSPVCSSPKPGSKEAEVGSDGERVAQTPDSSDGGLSPSGEDEDDE. Over residues 315–324 the composition is skewed to polar residues; sequence GSQSPTSPVC. Phosphoserine occurs at positions 321 and 326. A compositionally biased stretch (basic and acidic residues) spans 330-342; it reads GSKEAEVGSDGER. Residues 347 to 357 show a composition bias toward low complexity; the sequence is PDSSDGGLSPS. PbH1 repeat units follow at residues 423 to 444, 467 to 489, 490 to 512, 513 to 535, 536 to 558, 559 to 581, 582 to 604, 605 to 627, 628 to 650, 651 to 673, 713 to 735, 736 to 758, 760 to 782, 783 to 805, and 828 to 850; these read VQGC…FVCS, NSKI…FLRL, EGGG…DIRK, KSNP…VVLG, NGKG…YILY, HGNP…AVNE, NGKG…DIRR, GGVP…VVGD, EGKG…WMMS, SSLP…AVFS, ITVA…FVQS, SEAL…TIVQ, SQLT…KVEF, QCKV…ITKG, and RSDT…AVRG.

As to quaternary structure, component of the SCF(FBXO10) complex consisting of CUL1, SKP1 and FBXO10. Interacts with BCL2. Interacts with PRDM1. As to expression, particularly highly expressed in B-cells.

The protein localises to the cytoplasm. It functions in the pathway protein modification; protein ubiquitination. Substrate-recognition component of the SCF (SKP1-CUL1-F-box protein)-type E3 ubiquitin ligase complex. Mediates the ubiquitination and degradation of BCL2, an antiapoptotic protein, thereby playing a role in apoptosis by controlling the stability of BCL2. Targets also the receptor for advanced glycation end products RAGE for ubiquitination and subsequent lysosomal degradation. Directly controls HGAL/GCSAM ubiquitination and degradation and thereby decreases BCR signaling. The protein is F-box only protein 10 (Fbxo10) of Mus musculus (Mouse).